Reading from the N-terminus, the 341-residue chain is Aromatic amino acid aminotransferase (341 aa).

Lys-213 is modified (N6-(pyridoxal phosphate)lysine).

Belongs to the class-II pyridoxal-phosphate-dependent aminotransferase family. As to quaternary structure, homodimer. It depends on pyridoxal 5'-phosphate as a cofactor.

It catalyses the reaction an aromatic L-alpha-amino acid + 2-oxoglutarate = an aromatic oxo-acid + L-glutamate. Functionally, aminotransferase that catalyzes the conversion of aromatic amino acids and 2-oxoglutarate into corresponding aromatic oxo acids and L-glutamate. The sequence is that of Aromatic amino acid aminotransferase from Corynebacterium glutamicum (strain R).